We begin with the raw amino-acid sequence, 406 residues long: COP9 signalosome complex subunit 4 (406 aa).

Ala-2 bears the N-acetylalanine mark. N6-acetyllysine is present on Lys-25. Positions Tyr-197–Ala-366 constitute a PCI domain.

The protein belongs to the CSN4 family. In terms of assembly, component of the CSN complex, composed of COPS1/GPS1, COPS2, COPS3, COPS4, COPS5, COPS6, COPS7 (COPS7A or COPS7B), COPS8 and COPS9. In the complex, it probably interacts directly with COPS1, COPS2, COPS3, COPS5, COPS6, COPS7 (COPS7A or COPS7B) and COPS8. Interacts with TOR1A; the interaction is direct and associates TOR1A and SNAPIN with the CSN complex. Interacts with STON2; controls STON2 neddylation levels. Interacts with ERCC6.

Its subcellular location is the cytoplasm. The protein localises to the nucleus. It is found in the cytoplasmic vesicle. The protein resides in the secretory vesicle. It localises to the synaptic vesicle. Its function is as follows. Component of the COP9 signalosome complex (CSN), a complex involved in various cellular and developmental processes. The CSN complex is an essential regulator of the ubiquitin (Ubl) conjugation pathway by mediating the deneddylation of the cullin subunits of SCF-type E3 ligase complexes, leading to decrease the Ubl ligase activity of SCF-type complexes such as SCF, CSA or DDB2. Also involved in the deneddylation of non-cullin subunits such as STON2. The complex is also involved in phosphorylation of p53/TP53, c-jun/JUN, IkappaBalpha/NFKBIA, ITPK1, IRF8/ICSBP and SNAPIN, possibly via its association with CK2 and PKD kinases. CSN-dependent phosphorylation of TP53 and JUN promotes and protects degradation by the Ubl system, respectively. In Rattus norvegicus (Rat), this protein is COP9 signalosome complex subunit 4 (Cops4).